Here is a 172-residue protein sequence, read N- to C-terminus: Large ribosomal subunit protein bL9 (172 aa).

Belongs to the bacterial ribosomal protein bL9 family.

Functionally, binds to the 23S rRNA. This Chlamydia caviae (strain ATCC VR-813 / DSM 19441 / 03DC25 / GPIC) (Chlamydophila caviae) protein is Large ribosomal subunit protein bL9.